Consider the following 278-residue polypeptide: Shikimate dehydrogenase (NADP(+)) (278 aa).

Shikimate contacts are provided by residues 19 to 21 (SLS) and Thr66. The active-site Proton acceptor is the Lys70. Residues Asn91 and Asp106 each contribute to the shikimate site. NADP(+)-binding positions include 130–134 (GAGGS), 152–157 (NRTVEK), and Leu222. Tyr224 provides a ligand contact to shikimate. Gly245 provides a ligand contact to NADP(+).

This sequence belongs to the shikimate dehydrogenase family. Homodimer.

The catalysed reaction is shikimate + NADP(+) = 3-dehydroshikimate + NADPH + H(+). Its pathway is metabolic intermediate biosynthesis; chorismate biosynthesis; chorismate from D-erythrose 4-phosphate and phosphoenolpyruvate: step 4/7. Functionally, involved in the biosynthesis of the chorismate, which leads to the biosynthesis of aromatic amino acids. Catalyzes the reversible NADPH linked reduction of 3-dehydroshikimate (DHSA) to yield shikimate (SA). This chain is Shikimate dehydrogenase (NADP(+)), found in Methanococcus aeolicus (strain ATCC BAA-1280 / DSM 17508 / OCM 812 / Nankai-3).